The chain runs to 748 residues: Wings apart-like protein homolog 1 (748 aa).

Disordered regions lie at residues 23-199 and 614-644; these read TLAQ…VYAT and EGGC…RLDR. A compositionally biased stretch (low complexity) spans 35–64; that stretch reads PSVRSSDSPDVPDTPDVPVNQLSSPPLSLP. 2 stretches are compositionally biased toward polar residues: residues 68–79 and 87–96; these read SEGNAETLQNLS and LSQSSTSSLN. A compositionally biased stretch (low complexity) spans 172 to 182; the sequence is ISSSSNRYSSR. Residues 205-723 enclose the WAPL domain; it reads KPLASGYGSR…KRLYDFTKAT (519 aa). A compositionally biased stretch (acidic residues) spans 616–633; sequence GCGDEEEEEEGGDESSDE. Positions 634–644 are enriched in basic and acidic residues; it reads DGVRKDGRLDR.

It belongs to the WAPL family.

Its subcellular location is the nucleus. Functionally, regulator of meiotic chromosome structure and function, playing a role in sister chromatid cohesion, possibly via antagonizing the coh-3/-4 association with axial elements in nuclei during late prophase, cohesin association with chromatin, DNA double strand break repair and polar body positioning following meiotic divisions during oogenesis. Regulates the morphogenesis and temporal assembly of axial elements to control the organization of meiotic chromosomes in pachytene nuclei and is also involved in meiotic chromosomal remodeling in late pachytene nuclei. Required for the removal of the cohesin component scc-1 from mitotic chromosomes. The chain is Wings apart-like protein homolog 1 from Caenorhabditis elegans.